The following is an 84-amino-acid chain: Putative membrane protein insertion efficiency factor (84 aa).

This sequence belongs to the UPF0161 family.

The protein resides in the cell inner membrane. In terms of biological role, could be involved in insertion of integral membrane proteins into the membrane. This is Putative membrane protein insertion efficiency factor from Shewanella baltica (strain OS195).